Here is a 309-residue protein sequence, read N- to C-terminus: tRNA pseudouridine synthase B (309 aa).

Aspartate 39 serves as the catalytic Nucleophile.

The protein belongs to the pseudouridine synthase TruB family. Type 1 subfamily.

The enzyme catalyses uridine(55) in tRNA = pseudouridine(55) in tRNA. Its function is as follows. Responsible for synthesis of pseudouridine from uracil-55 in the psi GC loop of transfer RNAs. In Bacillus licheniformis (strain ATCC 14580 / DSM 13 / JCM 2505 / CCUG 7422 / NBRC 12200 / NCIMB 9375 / NCTC 10341 / NRRL NRS-1264 / Gibson 46), this protein is tRNA pseudouridine synthase B.